The sequence spans 368 residues: uncharacterized protein (368 aa).

5 consecutive transmembrane segments (helical) span residues 22–42 (VAGIPLYKIIIASAIMLFTLI), 74–94 (FVKPFSYFIVVFGFYLSLLVL), 104–124 (FLKTFSLLILGWAIIRFLNLF), 144–164 (VGDFILKILKAFVVVIVGASL), and 168–188 (WGVNIGAILASVGLLGLAVSL).

Belongs to the MscS (TC 1.A.23) family.

It is found in the cell membrane. This is an uncharacterized protein from Aquifex aeolicus (strain VF5).